Here is a 366-residue protein sequence, read N- to C-terminus: UDP-N-acetylglucosamine--N-acetylmuramyl-(pentapeptide) pyrophosphoryl-undecaprenol N-acetylglucosamine transferase (366 aa).

Residues threonine 10–glycine 12, asparagine 124, arginine 165, serine 192, isoleucine 247, and glutamine 292 contribute to the UDP-N-acetyl-alpha-D-glucosamine site.

It belongs to the glycosyltransferase 28 family. MurG subfamily.

It localises to the cell inner membrane. The enzyme catalyses di-trans,octa-cis-undecaprenyl diphospho-N-acetyl-alpha-D-muramoyl-L-alanyl-D-glutamyl-meso-2,6-diaminopimeloyl-D-alanyl-D-alanine + UDP-N-acetyl-alpha-D-glucosamine = di-trans,octa-cis-undecaprenyl diphospho-[N-acetyl-alpha-D-glucosaminyl-(1-&gt;4)]-N-acetyl-alpha-D-muramoyl-L-alanyl-D-glutamyl-meso-2,6-diaminopimeloyl-D-alanyl-D-alanine + UDP + H(+). Its pathway is cell wall biogenesis; peptidoglycan biosynthesis. In terms of biological role, cell wall formation. Catalyzes the transfer of a GlcNAc subunit on undecaprenyl-pyrophosphoryl-MurNAc-pentapeptide (lipid intermediate I) to form undecaprenyl-pyrophosphoryl-MurNAc-(pentapeptide)GlcNAc (lipid intermediate II). In Geotalea daltonii (strain DSM 22248 / JCM 15807 / FRC-32) (Geobacter daltonii), this protein is UDP-N-acetylglucosamine--N-acetylmuramyl-(pentapeptide) pyrophosphoryl-undecaprenol N-acetylglucosamine transferase.